Reading from the N-terminus, the 391-residue chain is Solute carrier family 35 member F2 (391 aa).

The next 10 membrane-spanning stretches (helical) occupy residues 39-59, 73-93, 108-128, 137-157, 165-185, 200-220, 230-250, 267-287, 294-314, and 318-338; these read MLLSVALGQVLSLLICGIRLT, LFQSFLNYILLFLVYTTTLAV, WWKYMFLGIIDIEATYLVVKA, IQLLNCFVIPVVILLSWFFLL, FIGAIACILGIGCMAGADVLM, LIGDVLVLGGATLYGISSVCQ, VELLGMIGLFGSFFSGIQLAI, LLYVGFTACMFGLYSFMPVVI, AINLSMLTAELYTFFCGLFLF, and FSGLYLLSFFTILLGLVFYFS. The disordered stretch occupies residues 361-391; that stretch reads VELPSSGQLEPSVTYTSLSQETEEEPRVRVA. A compositionally biased stretch (polar residues) spans 365–380; that stretch reads SSGQLEPSVTYTSLSQ.

The protein belongs to the SLC35F solute transporter family.

Its subcellular location is the membrane. Functionally, putative solute transporter. This Xenopus tropicalis (Western clawed frog) protein is Solute carrier family 35 member F2 (slc35f2).